The following is a 147-amino-acid chain: D-aminoacyl-tRNA deacylase (147 aa).

The short motif at 136–137 (GP) is the Gly-cisPro motif, important for rejection of L-amino acids element.

The protein belongs to the DTD family. Homodimer.

The protein localises to the cytoplasm. It carries out the reaction glycyl-tRNA(Ala) + H2O = tRNA(Ala) + glycine + H(+). The enzyme catalyses a D-aminoacyl-tRNA + H2O = a tRNA + a D-alpha-amino acid + H(+). Functionally, an aminoacyl-tRNA editing enzyme that deacylates mischarged D-aminoacyl-tRNAs. Also deacylates mischarged glycyl-tRNA(Ala), protecting cells against glycine mischarging by AlaRS. Acts via tRNA-based rather than protein-based catalysis; rejects L-amino acids rather than detecting D-amino acids in the active site. By recycling D-aminoacyl-tRNA to D-amino acids and free tRNA molecules, this enzyme counteracts the toxicity associated with the formation of D-aminoacyl-tRNA entities in vivo and helps enforce protein L-homochirality. This is D-aminoacyl-tRNA deacylase from Streptococcus pneumoniae serotype 4 (strain ATCC BAA-334 / TIGR4).